We begin with the raw amino-acid sequence, 518 residues long: Trigger factor (518 aa).

In terms of domain architecture, PPIase FKBP-type spans 170 to 255 (GDVVVIDFVG…VKGLESPQEA (86 aa)). The tract at residues 447–518 (EAPAKPAKKA…AKKAAAKKDA (72 aa)) is disordered. Basic residues-rich tracts occupy residues 452–468 (PAKKAVAKKKAPAKKAA) and 501–518 (PAAKKKAPAKKAAAKKDA).

The protein belongs to the FKBP-type PPIase family. Tig subfamily.

Its subcellular location is the cytoplasm. It catalyses the reaction [protein]-peptidylproline (omega=180) = [protein]-peptidylproline (omega=0). In terms of biological role, involved in protein export. Acts as a chaperone by maintaining the newly synthesized protein in an open conformation. Functions as a peptidyl-prolyl cis-trans isomerase. This Maricaulis maris (strain MCS10) (Caulobacter maris) protein is Trigger factor.